A 61-amino-acid polypeptide reads, in one-letter code: Defensin BmKDfsin2 (61 aa).

An N-terminal signal peptide occupies residues 1–24; sequence METIVLLFLLALVFCTLEMGMVEA. 3 disulfides stabilise this stretch: C28–C49, C35–C57, and C39–C59.

This sequence belongs to the invertebrate defensin family. Type 2 subfamily. Highly expressed in non-venom gland (hemolymph) and moderately expressed in venom gland.

The protein localises to the secreted. Functionally, antibacterial peptide active against Gram-positive bacteria, but not on Gram-negative bacteria. Also has weak blocking activity on Kv1.1/KCNA1, Kv1.2/KCNA2, Kv1.3/KCNA3, KCa3.1/KCNN4/IK, KCa2.3/KCNN3/SK3 and Kv11.1/KCNH2/ERG1 channels (tested at 1 uM). It inhibits potassium channel current by interacting with the pore region. The chain is Defensin BmKDfsin2 from Olivierus martensii (Manchurian scorpion).